The sequence spans 1215 residues: Zinc finger SWIM domain-containing protein 6 (1215 aa).

Disordered regions lie at residues 1–46 (MAER…RPGP) and 133–161 (AAGGPGDDSGGGGGAGGGGGGGSSSSPAA). Gly residues-rich tracts occupy residues 18–38 (PGGGGGGGGSSGGGGGAGGGY) and 133–155 (AAGGPGDDSGGGGGAGGGGGGGS). Residues 246–283 (CNVAISFDRCKITSVTCSCGNKDIFYCAHVVALSLYRI) form an SWIM-type zinc finger.

Functionally, involved in nervous system development, important for striatal morphology and motor regulation. This chain is Zinc finger SWIM domain-containing protein 6, found in Homo sapiens (Human).